The following is a 277-amino-acid chain: NH(3)-dependent NAD(+) synthetase (277 aa).

An ATP-binding site is contributed by 47–54; the sequence is GISGGQDS. Mg(2+) is bound at residue Asp-53. Arg-141 is a deamido-NAD(+) binding site. Thr-161 contacts ATP. Glu-166 contacts Mg(2+). Lys-174 and Asp-181 together coordinate deamido-NAD(+). ATP is bound by residues Lys-190 and Thr-212. Residue 261 to 262 coordinates deamido-NAD(+); the sequence is HK.

It belongs to the NAD synthetase family. As to quaternary structure, homodimer.

It catalyses the reaction deamido-NAD(+) + NH4(+) + ATP = AMP + diphosphate + NAD(+) + H(+). Its pathway is cofactor biosynthesis; NAD(+) biosynthesis; NAD(+) from deamido-NAD(+) (ammonia route): step 1/1. In terms of biological role, catalyzes the ATP-dependent amidation of deamido-NAD to form NAD. Uses ammonia as a nitrogen source. This chain is NH(3)-dependent NAD(+) synthetase, found in Lactobacillus gasseri (strain ATCC 33323 / DSM 20243 / BCRC 14619 / CIP 102991 / JCM 1131 / KCTC 3163 / NCIMB 11718 / NCTC 13722 / AM63).